The sequence spans 242 residues: Trypsin-1 (242 aa).

The first 15 residues, 1–15 (MISLVFVLLIGAAFA), serve as a signal peptide directing secretion. Positions 16-20 (TEDDK) are cleaved as a propeptide — activation peptide. The 220-residue stretch at 21-240 (IVGGYECKAY…FNDWLTSTMA (220 aa)) folds into the Peptidase S1 domain. Disulfide bonds link Cys-27–Cys-156, Cys-45–Cys-61, Cys-129–Cys-229, Cys-136–Cys-202, Cys-167–Cys-181, and Cys-192–Cys-216. His-60 functions as the Charge relay system in the catalytic mechanism. Residues Glu-72, Asn-74, Val-77, and Glu-82 each contribute to the Ca(2+) site. The active-site Charge relay system is Asp-104. Catalysis depends on Ser-196, which acts as the Charge relay system.

This sequence belongs to the peptidase S1 family. It depends on Ca(2+) as a cofactor.

It localises to the secreted. The protein localises to the extracellular space. The catalysed reaction is Preferential cleavage: Arg-|-Xaa, Lys-|-Xaa.. In Salmo salar (Atlantic salmon), this protein is Trypsin-1.